Reading from the N-terminus, the 412-residue chain is Phytoene synthase 1, chloroplastic (412 aa).

The transit peptide at 1-129 directs the protein to the chloroplast; that stretch reads MSVALLWVVS…AYDRCGEVCA (129 aa).

Belongs to the phytoene/squalene synthase family. Monomer. Interacts with SGR1.

The protein resides in the plastid. It localises to the chloroplast. It catalyses the reaction 2 (2E,6E,10E)-geranylgeranyl diphosphate = 15-cis-phytoene + 2 diphosphate. It participates in carotenoid biosynthesis; phytoene biosynthesis; all-trans-phytoene from geranylgeranyl diphosphate: step 1/1. Catalyzes the reaction from prephytoene diphosphate to phytoene. The protein is Phytoene synthase 1, chloroplastic (PSY1) of Solanum lycopersicum (Tomato).